The following is a 445-amino-acid chain: Probable D-serine dehydratase (445 aa).

The residue at position 119 (lysine 119) is an N6-(pyridoxal phosphate)lysine.

This sequence belongs to the serine/threonine dehydratase family. DsdA subfamily. It depends on pyridoxal 5'-phosphate as a cofactor.

The catalysed reaction is D-serine = pyruvate + NH4(+). This is Probable D-serine dehydratase from Pseudomonas putida (strain GB-1).